The primary structure comprises 246 residues: Carboxy-S-adenosyl-L-methionine synthase (246 aa).

Residues Tyr-39, 64–66, 89–90, 117–118, Asn-132, and Arg-199 contribute to the S-adenosyl-L-methionine site; these read GCS, DN, and DI.

Belongs to the class I-like SAM-binding methyltransferase superfamily. Cx-SAM synthase family. In terms of assembly, homodimer.

The catalysed reaction is prephenate + S-adenosyl-L-methionine = carboxy-S-adenosyl-L-methionine + 3-phenylpyruvate + H2O. Catalyzes the conversion of S-adenosyl-L-methionine (SAM) to carboxy-S-adenosyl-L-methionine (Cx-SAM). The polypeptide is Carboxy-S-adenosyl-L-methionine synthase (Erwinia tasmaniensis (strain DSM 17950 / CFBP 7177 / CIP 109463 / NCPPB 4357 / Et1/99)).